The sequence spans 259 residues: Ubiquinol-cytochrome c reductase complex assembly factor 1 (259 aa).

It belongs to the CBP3 family. As to quaternary structure, interacts with sloth1; the interaction is probably involved in the assembly and stability of the mitochondrial ubiquinol-cytochrome c reductase complex.

The protein resides in the mitochondrion inner membrane. Its function is as follows. Required for the assembly of the ubiquinol-cytochrome c reductase complex (mitochondrial respiratory chain complex III or cytochrome b-c1 complex). May be involved in cytochrome b translation and/or stability. In Drosophila melanogaster (Fruit fly), this protein is Ubiquinol-cytochrome c reductase complex assembly factor 1.